Consider the following 164-residue polypeptide: V-type proton ATPase subunit c' (164 aa).

Residues 1 to 16 (MDMVASDNVYAPLYAP) are Lumenal-facing. The helical transmembrane segment at 17–37 (FFGFAGCALAMILSCLGAAIG) threads the bilayer. At 38 to 59 (TAKSGIGIAGIGTFKPELIMKS) the chain is on the cytoplasmic side. Residues 60-80 (LIPVVMSGILAIYGLVVAVLI) traverse the membrane as a helical segment. Residues 81-98 (AGNLSPTEEYTLFNGFMH) lie on the Lumenal side of the membrane. A helical transmembrane segment spans residues 99–119 (LSCGLCVGFACLSSGYAIGIV). Residues 120–136 (GDVGVRKYMHQPRLFVG) lie on the Cytoplasmic side of the membrane. Residues 137-157 (IVLILIFSEVLGLYGMIIALI) form a helical membrane-spanning segment. The Lumenal segment spans residues 158–164 (LNTKGSE).

The protein belongs to the V-ATPase proteolipid subunit family. V-ATPase is a heteromultimeric enzyme composed of a peripheral catalytic V1 complex (components A to H) attached to an integral membrane V0 proton pore complex (components: a, c, c', c'', d, e, f and VOA1). The decameric c-ring forms the proton-conducting pore, and is composed of eight proteolipid subunits c, one subunit c' and one subunit c''.

Its subcellular location is the vacuole membrane. Its function is as follows. Proton-conducting pore forming subunit of the V0 complex of vacuolar(H+)-ATPase (V-ATPase), a multisubunit enzyme composed of a peripheral complex (V1) that hydrolyzes ATP and a membrane integral complex (V0) that translocates protons. V-ATPase is responsible for acidifying and maintaining the pH of intracellular compartments. The protein is V-type proton ATPase subunit c' (VMA11) of Candida glabrata (strain ATCC 2001 / BCRC 20586 / JCM 3761 / NBRC 0622 / NRRL Y-65 / CBS 138) (Yeast).